The sequence spans 616 residues: Chaperone protein HscA (616 aa).

This sequence belongs to the heat shock protein 70 family.

Its function is as follows. Chaperone involved in the maturation of iron-sulfur cluster-containing proteins. Has a low intrinsic ATPase activity which is markedly stimulated by HscB. Involved in the maturation of IscU. This chain is Chaperone protein HscA, found in Shigella flexneri serotype 5b (strain 8401).